A 355-amino-acid polypeptide reads, in one-letter code: Zinc finger protein CONSTANS-LIKE 5 (355 aa).

8 residues coordinate Zn(2+): C22, C25, C45, H50, C61, C64, C84, and H89. The B box-type 1; atypical zinc-finger motif lies at 22–60; the sequence is CDACKSVTAAVFCRVDSAFLCIACDTRIHSFTRHERVWV. The B box-type 2; atypical zinc finger occupies 61-103; that stretch reads CEVCEQAPAAVTCKADAAALCVSCDADIHSANPLASRHERVPV. In terms of domain architecture, CCT spans 285–327; it reads REARVLRYREKRKNRKFEKTIRYASRKAYAESRPRIKGRFAKR.

The protein belongs to the CONSTANS family.

The protein localises to the nucleus. This is Zinc finger protein CONSTANS-LIKE 5 (COL5) from Arabidopsis thaliana (Mouse-ear cress).